A 361-amino-acid chain; its full sequence is Phosphoserine aminotransferase (361 aa).

Position 42 (R42) interacts with L-glutamate. Pyridoxal 5'-phosphate contacts are provided by residues 76 to 77, W102, T153, D173, and Q196; that span reads AR. An N6-(pyridoxal phosphate)lysine modification is found at K197. 238–239 is a pyridoxal 5'-phosphate binding site; the sequence is NT.

It belongs to the class-V pyridoxal-phosphate-dependent aminotransferase family. SerC subfamily. Homodimer. The cofactor is pyridoxal 5'-phosphate.

It is found in the cytoplasm. The catalysed reaction is O-phospho-L-serine + 2-oxoglutarate = 3-phosphooxypyruvate + L-glutamate. It catalyses the reaction 4-(phosphooxy)-L-threonine + 2-oxoglutarate = (R)-3-hydroxy-2-oxo-4-phosphooxybutanoate + L-glutamate. It participates in amino-acid biosynthesis; L-serine biosynthesis; L-serine from 3-phospho-D-glycerate: step 2/3. The protein operates within cofactor biosynthesis; pyridoxine 5'-phosphate biosynthesis; pyridoxine 5'-phosphate from D-erythrose 4-phosphate: step 3/5. In terms of biological role, catalyzes the reversible conversion of 3-phosphohydroxypyruvate to phosphoserine and of 3-hydroxy-2-oxo-4-phosphonooxybutanoate to phosphohydroxythreonine. The chain is Phosphoserine aminotransferase from Yersinia pestis (strain Pestoides F).